A 96-amino-acid polypeptide reads, in one-letter code: UPF0251 protein VPA0321 (96 aa).

It belongs to the UPF0251 family.

The chain is UPF0251 protein VPA0321 from Vibrio parahaemolyticus serotype O3:K6 (strain RIMD 2210633).